The primary structure comprises 322 residues: Reticulocalbin-1 (322 aa).

A signal peptide spans 1–19 (MDVLGFICAVFLGTVVLHA). An N-linked (GlcNAc...) asparagine glycan is attached at asparagine 44. EF-hand domains are found at residues 70–105 (ESKD…VQKR), 106–141 (YVYE…YYLS), 157–192 (KMLP…EEFE), 194–229 (MKDI…HEDR), 235–270 (WVKT…QDYD), and 271–306 (HAQA…FVGS). Ca(2+) is bound by residues aspartate 83, aspartate 85, asparagine 87, tyrosine 89, glutamate 94, aspartate 119, asparagine 121, aspartate 123, lysine 125, glutamate 130, aspartate 170, aspartate 172, aspartate 174, glutamate 181, aspartate 207, asparagine 209, aspartate 211, histidine 213, glutamate 218, aspartate 248, asparagine 250, aspartate 252, lysine 254, glutamate 259, aspartate 284, aspartate 286, aspartate 288, methionine 290, and glutamate 295. A Prevents secretion from ER motif is present at residues 319–322 (HDEL).

This sequence belongs to the CREC family.

The protein localises to the endoplasmic reticulum lumen. Its function is as follows. May regulate calcium-dependent activities in the endoplasmic reticulum lumen or post-ER compartment. The sequence is that of Reticulocalbin-1 (rcn1) from Takifugu rubripes (Japanese pufferfish).